The primary structure comprises 123 residues: Beta-2-microglobulin (123 aa).

Positions 1-21 (MSRLFLFALLGHLCFLPYLDA) are cleaved as a signal peptide. Positions 29–118 (PRVQVYSRYP…STLNEPKVVK (90 aa)) constitute an Ig-like C1-type domain. A disulfide bridge links C49 with C104.

This sequence belongs to the beta-2-microglobulin family. In terms of assembly, heterodimer of an alpha chain and a beta chain. Beta-2-microglobulin is the beta-chain of major histocompatibility complex class I molecules.

The protein resides in the secreted. In terms of biological role, component of the class I major histocompatibility complex (MHC). Involved in the presentation of peptide antigens to the immune system. The chain is Beta-2-microglobulin (B2M) from Monodelphis domestica (Gray short-tailed opossum).